Here is a 383-residue protein sequence, read N- to C-terminus: MSCRKFNAPRHGSLQFCPRKRSKTIRPAAGAFPADDRSQPVHLTGFMAYKAGMTHVVRTKTQVAKNKQLSREIMDAVTVLEAPPMVVYGIVGYEKTVTGLRRLPIVTAAYVSDGVLRRMFGNRYASKESAGQFCKGSVCESRVEMIKERAHCVRVLVQTQPTLIKGLGLKKAHIAEIQVNGGSISEKVEWALGRLEKEIAIGEVFGVNENIDTIGVTKGKGFQGTVKRFGVRKQPRKSRKGIRKVACIGAWHPSRVMYSIARAGQMGFHRRTEKNKRVYMIGNGSSNIKTEFDLTEKPISPMGGFPHYGEVRNDFIMVKGAVVGARKRVVTLRKSLLRQRAGEELVIKFVDTSSKIGHGRFQTSAEKKAFYGARKADIAAEIH.

This sequence belongs to the universal ribosomal protein uL3 family.

It localises to the cytoplasm. The chain is Large ribosomal subunit protein uL3 (RPL3-1) from Encephalitozoon cuniculi (strain GB-M1) (Microsporidian parasite).